Reading from the N-terminus, the 344-residue chain is Methionine import ATP-binding protein MetN (344 aa).

Residues 2–241 enclose the ABC transporter domain; the sequence is IEINRVNKVF…PKTELARKFI (240 aa). 38–45 lines the ATP pocket; the sequence is GSSGAGKS.

It belongs to the ABC transporter superfamily. Methionine importer (TC 3.A.1.24) family. The complex is composed of two ATP-binding proteins (MetN), two transmembrane proteins (MetI) and a solute-binding protein (MetQ).

The protein localises to the cell inner membrane. It carries out the reaction L-methionine(out) + ATP + H2O = L-methionine(in) + ADP + phosphate + H(+). The enzyme catalyses D-methionine(out) + ATP + H2O = D-methionine(in) + ADP + phosphate + H(+). Functionally, part of the ABC transporter complex MetNIQ involved in methionine import. Responsible for energy coupling to the transport system. In Photobacterium profundum (strain SS9), this protein is Methionine import ATP-binding protein MetN.